A 901-amino-acid chain; its full sequence is HTH-type transcriptional regulator MalT (901 aa).

39–46 (SPAGYGKT) provides a ligand contact to ATP. The HTH luxR-type domain maps to 829 to 894 (ELIRTSPLTQ…AAVQHAQKLL (66 aa)). Positions 853–872 (NEQIAGELEVAATTIKTHIR) form a DNA-binding region, H-T-H motif.

It belongs to the MalT family. As to quaternary structure, monomer in solution. Oligomerizes to an active state in the presence of the positive effectors ATP and maltotriose.

Activated by ATP and maltotriose, which are both required for DNA binding. Its function is as follows. Positively regulates the transcription of the maltose regulon whose gene products are responsible for uptake and catabolism of malto-oligosaccharides. Specifically binds to the promoter region of its target genes, recognizing a short DNA motif called the MalT box. This Escherichia coli O7:K1 (strain IAI39 / ExPEC) protein is HTH-type transcriptional regulator MalT.